We begin with the raw amino-acid sequence, 803 residues long: Volume-regulated anion channel subunit LRRC8C (803 aa).

At Met1–Pro22 the chain is on the cytoplasmic side. A helical membrane pass occupies residues Trp23–Cys43. Residues Thr44 to Lys125 are Extracellular-facing. Intrachain disulfides connect Cys54–Cys308 and Cys115–Cys293. Asn64 and Asn70 each carry an N-linked (GlcNAc...) asparagine glycan. The helical transmembrane segment at Tyr126–Phe146 threads the bilayer. Topologically, residues Lys147–Thr266 are cytoplasmic. Positions Glu177–Gln211 are disordered. Positions Asn191–Gln211 are enriched in polar residues. Residues Ser212 and Ser215 each carry the phosphoserine modification. Residues Val267 to Val287 form a helical membrane-spanning segment. Topologically, residues Gln288–Ser320 are extracellular. A helical membrane pass occupies residues Phe321 to Leu341. The Cytoplasmic segment spans residues Phe342–Asp803. 17 LRR repeats span residues Glu397–Thr420, Asn421–Ile443, Leu446–Leu466, Asp467–Phe488, Lys490–Leu513, Asn515–Ser537, Leu541–Val563, Ser565–Lys587, Met588–Leu611, Ser613–His635, Arg637–Leu659, Thr660–Cys682, Lys684–Leu705, Gln706–Cys728, Lys730–Leu751, Leu752–Cys774, and Ala776–Gln799.

The protein belongs to the LRRC8 family. In terms of assembly, heterohexamer; oligomerizes with other LRRC8 proteins (LRRC8A, LRRC8B, LRRC8D and/or LRRC8E) to form a heterohexamer. Homoheptamer; inactive, likely because it is not targeted to the plasma membrane in the absence of LRRC8A. In vivo, the subunit composition may depend primarily on expression levels, and heterooligomeric channels containing various proportions of the different LRRC8 proteins may coexist.

Its subcellular location is the cell membrane. It localises to the endoplasmic reticulum membrane. The enzyme catalyses chloride(in) = chloride(out). It catalyses the reaction iodide(out) = iodide(in). The catalysed reaction is taurine(out) = taurine(in). It carries out the reaction 2',3'-cGAMP(out) = 2',3'-cGAMP(in). Non-essential component of the volume-regulated anion channel (VRAC, also named VSOAC channel), an anion channel required to maintain a constant cell volume in response to extracellular or intracellular osmotic changes. The VRAC channel conducts iodide better than chloride and can also conduct organic osmolytes like taurine. Plays a redundant role in the efflux of amino acids, such as aspartate and glutamate, in response to osmotic stress. The VRAC channel also mediates transport of immunoreactive cyclic dinucleotide GMP-AMP (2'-3'-cGAMP), an immune messenger produced in response to DNA virus in the cytosol. Channel activity requires LRRC8A plus at least one other family member (LRRC8B, LRRC8C, LRRC8D or LRRC8E); channel characteristics depend on the precise subunit composition. This chain is Volume-regulated anion channel subunit LRRC8C, found in Rattus norvegicus (Rat).